The primary structure comprises 653 residues: DNA polymerase (653 aa).

The protein belongs to the DNA polymerase type-B family.

The enzyme catalyses DNA(n) + a 2'-deoxyribonucleoside 5'-triphosphate = DNA(n+1) + diphosphate. Functionally, replicates viral genomic DNA. This is DNA polymerase from Acidianus convivator (ABV).